We begin with the raw amino-acid sequence, 67 residues long: Protein AaeX (67 aa).

2 helical membrane passes run 3–23 (LLPV…ELLI) and 39–59 (GIYE…CCLF).

This sequence belongs to the AaeX family.

It localises to the cell membrane. The protein is Protein AaeX of Yersinia pseudotuberculosis serotype O:1b (strain IP 31758).